Reading from the N-terminus, the 66-residue chain is Heat-stable enterotoxin (66 aa).

A signal peptide spans 1–19; the sequence is MKKIVFVLVLMLSSFGTFG. Positions 20 to 50 are excised as a propeptide; that stretch reads QETASRQFGDAFSTPIAAEVNKKACDTELPP. 3 cysteine pairs are disulfide-bonded: cysteine 54/cysteine 59, cysteine 55/cysteine 63, and cysteine 58/cysteine 66.

The protein belongs to the heat-stable enterotoxin family.

Its subcellular location is the secreted. In terms of biological role, toxin which activates the particulate form of guanylate cyclase and increases cyclic GMP levels within the host intestinal epithelial cells. This Yersinia kristensenii protein is Heat-stable enterotoxin (yst).